Consider the following 274-residue polypeptide: Nitrogenase iron protein (274 aa).

8-15 provides a ligand contact to ATP; it reads GKGGIGKS. [4Fe-4S] cluster is bound at residue cysteine 94. The residue at position 97 (arginine 97) is an ADP-ribosylarginine; by dinitrogenase reductase ADP-ribosyltransferase. Cysteine 131 lines the [4Fe-4S] cluster pocket.

This sequence belongs to the NifH/BchL/ChlL family. Homodimer. It depends on [4Fe-4S] cluster as a cofactor. Post-translationally, the reversible ADP-ribosylation of Arg-97 inactivates the nitrogenase reductase and regulates nitrogenase activity.

It carries out the reaction N2 + 8 reduced [2Fe-2S]-[ferredoxin] + 16 ATP + 16 H2O = H2 + 8 oxidized [2Fe-2S]-[ferredoxin] + 2 NH4(+) + 16 ADP + 16 phosphate + 6 H(+). In terms of biological role, the key enzymatic reactions in nitrogen fixation are catalyzed by the nitrogenase complex, which has 2 components: the iron protein and the molybdenum-iron protein. This is Nitrogenase iron protein from Chlorobaculum parvum (strain DSM 263 / NCIMB 8327) (Chlorobium vibrioforme subsp. thiosulfatophilum).